Consider the following 3797-residue polypeptide: A-kinase anchor protein 9 (3797 aa).

The interval 1–140 (MEDEERQRKL…SSEQGAQSSQ (140 aa)) is disordered. Composition is skewed to polar residues over residues 50–65 (HTDQ…SSQR) and 92–108 (EIST…NGCN). Basic and acidic residues predominate over residues 115 to 124 (KPTDPLREEE). Ser-139 is modified (phosphoserine). 2 coiled-coil regions span residues 140-607 (QTCL…LRTQ) and 640-976 (IHYK…LLAN). Ser-1288 carries the phosphoserine modification. 3 disordered regions span residues 1643-1668 (STQT…LERS), 2323-2343 (VVST…EESF), and 2419-2454 (SDNL…ASRT). 2 stretches are compositionally biased toward basic and acidic residues: residues 1648-1668 (DGHD…LERS) and 2328-2343 (QQRE…EESF). Positions 1808 to 2377 (SRLQAAVEKL…MTHMNNVLKE (570 aa)) form a coiled coil. Residues 2438 to 2454 (KQTSLTRLQESPEASRT) show a composition bias toward polar residues. Residues 2498–2510 (DLQRSLEKFAAAL) are PKA-RII subunit binding domain. Disordered stretches follow at residues 2604-2695 (LEEA…SSSG) and 3271-3296 (MEKD…QKKM). Positions 2606–2615 (EAEERPEEGG) are enriched in acidic residues. The segment covering 2642 to 2669 (PLTEAKEKLSYSLEKEKRTGEQESREAP) has biased composition (basic and acidic residues). A coiled-coil region spans residues 2975 to 3325 (LQKADRRSLL…QVYKLDLEGK (351 aa)). A compositionally biased stretch (polar residues) spans 3279–3294 (QKTLQTEQEANTQGQK). Phosphoserine occurs at positions 3732, 3755, and 3787.

Interacts with the regulatory region of protein kinase N (PKN), protein phosphatase 2A (PP2A), protein phosphatase 1 (PP1) and the immature non-phosphorylated form of PKC epsilon. Interacts with CIP4 and FNBP1. Interacts with chloride intracellular channel proteins CLIC1, CLIC4 and CLIC5. CSNK1D binding promotes its centrosomal subcellular location. Interacts with GM130/GOLGA2; leading to recruitment to the Golgi apparatus. Interacts with KCNQ1; targets protein kinase A (PKA) catalytic and regulatory subunits and protein phosphatase 1 (PP1), to the heterodimer KCNQ1-KCNE1. Interacts with PDE4DIP isoform 2; this interaction stabilizes both proteins. In complex with PDE4DIP isoform 2, recruits CAMSAP2 to the Golgi apparatus. Forms a pericentrosomal complex with CDK5RAP2, EB1/MAPRE1 and PDE4DIP isoform 2; within this complex, MAPRE1 binding to CDK5RAP2 may be mediated by PDE4DIP. Interacts with MAPRE1 and MAPRE3. Interacts (via C-terminus) with CAMSAP2; this interaction is much stronger in the presence of PDE4DIP isoform 2. Interacts with CAMSAP3. Interacts (via C-terminus) with the gamma-tubulin ring complex (gamma-TuRC), composed of gamma-tubulin, TUBGCP2, TUBGCP3, TUBGCP4, TUBGCP5 and TUBGCP6.

It localises to the golgi apparatus. It is found in the cytoplasm. The protein resides in the cytoskeleton. The protein localises to the microtubule organizing center. Its subcellular location is the centrosome. Functionally, scaffolding protein that assembles several protein kinases and phosphatases on the centrosome and Golgi apparatus. Required to maintain the integrity of the Golgi apparatus. Required for microtubule nucleation at the cis-side of the Golgi apparatus. Required for association of the centrosomes with the poles of the bipolar mitotic spindle during metaphase. In complex with PDE4DIP isoform 2/MMG8/SMYLE, recruits CAMSAP2 to the Golgi apparatus and tethers non-centrosomal minus-end microtubules to the Golgi, an important step for polarized cell movement. In complex with PDE4DIP isoform 2, EB1/MAPRE1 and CDK5RAP2, contributes to microtubules nucleation and extension also from the centrosome to the cell periphery. The sequence is that of A-kinase anchor protein 9 (Akap9) from Mus musculus (Mouse).